Consider the following 228-residue polypeptide: 2,3-bisphosphoglycerate-dependent phosphoglycerate mutase (228 aa).

Residues 8–15, 21–22, arginine 58, 111–114, lysine 122, 138–139, and 182–183 each bind substrate; these read RHGQSVWN, SG, ERMY, RR, and GN. Histidine 9 functions as the Tele-phosphohistidine intermediate in the catalytic mechanism. Glutamate 111 (proton donor/acceptor) is an active-site residue.

This sequence belongs to the phosphoglycerate mutase family. BPG-dependent PGAM subfamily.

It carries out the reaction (2R)-2-phosphoglycerate = (2R)-3-phosphoglycerate. Its pathway is carbohydrate degradation; glycolysis; pyruvate from D-glyceraldehyde 3-phosphate: step 3/5. Catalyzes the interconversion of 2-phosphoglycerate and 3-phosphoglycerate. In Chlamydia pneumoniae (Chlamydophila pneumoniae), this protein is 2,3-bisphosphoglycerate-dependent phosphoglycerate mutase.